Reading from the N-terminus, the 63-residue chain is UPF0337 protein Atu0782 (63 aa).

A disordered region spans residues 1-63 (MGSTSDKIAG…DAVKGAVDRM (63 aa)). Residues 51 to 63 (KAKDAVKGAVDRM) show a composition bias toward basic and acidic residues.

Belongs to the UPF0337 (CsbD) family.

In Agrobacterium fabrum (strain C58 / ATCC 33970) (Agrobacterium tumefaciens (strain C58)), this protein is UPF0337 protein Atu0782.